A 540-amino-acid chain; its full sequence is Cytochrome P450 monooxygenase ORF5 (540 aa).

A helical transmembrane segment spans residues 48–68 (YHALGTAIALFACACAYALVA). N376 and N460 each carry an N-linked (GlcNAc...) asparagine glycan. A heme-binding site is contributed by C483.

The protein belongs to the cytochrome P450 family. Heme is required as a cofactor.

Its subcellular location is the membrane. It participates in sesquiterpene biosynthesis. Functionally, cytochrome P450 monooxygenase; part of the gene cluster that mediates the biosynthesis of PR-toxin, a bicyclic sesquiterpene belonging to the eremophilane class and acting as a mycotoxin. The first step of the pathway is catalyzed by the aristolochene synthase which performs the cyclization of trans,trans-farnesyl diphosphate (FPP) to the bicyclic sesquiterpene aristolochene. Following the formation of aristolochene, the non-oxygenated aristolochene is converted to the trioxygenated intermediate eremofortin B, via 7-epi-neopetasone. This conversion appears to involve three enzymes, a hydroxysterol oxidase-like enzyme, the quinone-oxidase prx3 that forms the quinone-type-structure in the bicyclic nucleus of aristolochene with the C8-oxo group and the C-3 hydroxyl group, and the P450 monooxygenase ORF6 that introduces the epoxide at the double bond between carbons 1 and 2. No monoxy or dioxy-intermediates have been reported to be released to the broth, so these three early oxidative reactions may be coupled together. Eremofortin B is further oxidized by another P450 monooxygenase, that introduces a second epoxide between carbons 7 and 11 prior to acetylation to eremofortin A by the acetyltransferase ORF8. The second epoxidation may be performed by a second P450 monooxygenase. After the acetylation step, eremofortin A is converted to eremofortin C and then to PR-toxin. First the conversion of eremofortin A to eremofortin C proceeds by oxidation of the side chain of the molecule at C-12 and is catalyzed by the short-chain oxidoreductase prx1. The cytochrome P450 monooxygenase ORF6 is probably also involved in this step. The primary alcohol formed at C-12 is finally oxidized by the short-chain alcohol dehydrogenase prx4 that forms PR-toxin. The polypeptide is Cytochrome P450 monooxygenase ORF5 (Penicillium roqueforti (strain FM164)).